Here is a 160-residue protein sequence, read N- to C-terminus: Nucleotide-binding protein Noc_2254 (160 aa).

This sequence belongs to the YajQ family.

Functionally, nucleotide-binding protein. This Nitrosococcus oceani (strain ATCC 19707 / BCRC 17464 / JCM 30415 / NCIMB 11848 / C-107) protein is Nucleotide-binding protein Noc_2254.